Here is a 182-residue protein sequence, read N- to C-terminus: Transcription termination/antitermination protein NusG (182 aa).

This sequence belongs to the NusG family.

Functionally, participates in transcription elongation, termination and antitermination. The polypeptide is Transcription termination/antitermination protein NusG (Chlamydia muridarum (strain MoPn / Nigg)).